Consider the following 391-residue polypeptide: Lipid-A-disaccharide synthase (391 aa).

The protein belongs to the LpxB family.

The catalysed reaction is a lipid X + a UDP-2-N,3-O-bis[(3R)-3-hydroxyacyl]-alpha-D-glucosamine = a lipid A disaccharide + UDP + H(+). Its pathway is bacterial outer membrane biogenesis; LPS lipid A biosynthesis. Condensation of UDP-2,3-diacylglucosamine and 2,3-diacylglucosamine-1-phosphate to form lipid A disaccharide, a precursor of lipid A, a phosphorylated glycolipid that anchors the lipopolysaccharide to the outer membrane of the cell. This is Lipid-A-disaccharide synthase from Rickettsia akari (strain Hartford).